A 675-amino-acid chain; its full sequence is TOM1-like protein 9 (675 aa).

Positions 9–138 constitute a VHS domain; that stretch reads ATSEMLIGPD…ELLRAGAVFP (130 aa). 5 disordered regions span residues 144–181, 270–322, 371–524, 542–561, and 622–675; these read SAPVFTPPQTQPLTSYPPNLRNAGPGNDVPEPSAEPEF, LPGT…QLAL, FSDN…YAQM, QNGVYMPNQPNQALGSGYQP, and RDQT…AGTM. The 89-residue stretch at 180–268 folds into the GAT domain; it reads EFPTLSLSEI…VLTNYEAIAS (89 aa). Polar residues-rich tracts occupy residues 299 to 317 and 372 to 435; these read GDSSNQANGATSSSGNGVL and SDNT…GQGV. Residues 436–451 show a composition bias toward low complexity; that stretch reads SSPWSSQPAQQPVQPS. Composition is skewed to polar residues over residues 470–481 and 488–524; these read QDYSPSAESGSP and PTQTAFTHAQPVNNNNPYPQIPQTGPPVNNNSPYAQM. The span at 646-661 shows a compositional bias: basic and acidic residues; the sequence is NKPEDKLFGDLVDISK.

The protein belongs to the TOM1 family. As to quaternary structure, interacts with ELC/VPS23A and ELCL/VPS23B. In terms of tissue distribution, ubiquitously expressed.

The protein localises to the cytoplasm. Its subcellular location is the membrane. Its function is as follows. Might contribute to the loading of the ESCRT machinery. In Arabidopsis thaliana (Mouse-ear cress), this protein is TOM1-like protein 9.